We begin with the raw amino-acid sequence, 106 residues long: UPF0145 protein azo0572 (106 aa).

It belongs to the UPF0145 family.

This Azoarcus sp. (strain BH72) protein is UPF0145 protein azo0572.